We begin with the raw amino-acid sequence, 350 residues long: MPVLHNRISNEELKARMLAETEPRTTVSFYKYFILEDAKAFRDNLYSQFVKLGVFGRVYVAKEGINAQISVPANRYDEFKVVLFAAHPALDQVRLNVAHEDDGKSFWVLRMKVRERIVADGIDDDSFDPSNVGHYLKADQVNQMIDDPDTLFVDMRNHYEYEVGHFENAIEVPSDTFREQLPMAVDMLQHDKEKNIVMYCTGGIRCEKASAYMLHNGFKNVFHVEGGIIEYARKAKEQGLPLKFIGKNFVFDERMGERISEDVIAHCHQCGTPSDTHTNCKNDGCHLLFIQCPACAAKFEGCCSPICQEELKLPQEEQRARRAGRENGIKIFNKSKGLLQTTMHIPMPDK.

Residues 146–240 enclose the Rhodanese domain; it reads DDPDTLFVDM…YARKAKEQGL (95 aa). C200 functions as the Cysteine persulfide intermediate in the catalytic mechanism.

It belongs to the TrhO family.

It catalyses the reaction uridine(34) in tRNA + AH2 + O2 = 5-hydroxyuridine(34) in tRNA + A + H2O. Catalyzes oxygen-dependent 5-hydroxyuridine (ho5U) modification at position 34 in tRNAs. The chain is tRNA uridine(34) hydroxylase from Yersinia enterocolitica serotype O:8 / biotype 1B (strain NCTC 13174 / 8081).